The chain runs to 358 residues: uncharacterized protein (358 aa).

A disordered region spans residues 1–47 (MGNVAGETRANVIPLHTNRSRVAARRRAGQRAESRQHPSLLSDPNDR). Residues 18–29 (NRSRVAARRRAG) show a composition bias toward basic residues.

This sequence to M.leprae ML2427.

This is an uncharacterized protein from Mycobacterium tuberculosis (strain CDC 1551 / Oshkosh).